Reading from the N-terminus, the 364-residue chain is Ribosomal RNA large subunit methyltransferase F (364 aa).

The interval 1–52 is disordered; that stretch reads MPKPAIKTAAKLAMSSAGKRGKPSTPKSLAKPQTTKPKTASKLKAKHGEQKR. Polar residues predominate over residues 25–38; that stretch reads TPKSLAKPQTTKPK.

Belongs to the methyltransferase superfamily. METTL16/RlmF family.

Its subcellular location is the cytoplasm. It carries out the reaction adenosine(1618) in 23S rRNA + S-adenosyl-L-methionine = N(6)-methyladenosine(1618) in 23S rRNA + S-adenosyl-L-homocysteine + H(+). Functionally, specifically methylates the adenine in position 1618 of 23S rRNA. The polypeptide is Ribosomal RNA large subunit methyltransferase F (Shewanella sp. (strain ANA-3)).